Here is a 549-residue protein sequence, read N- to C-terminus: Glucose-6-phosphate isomerase (549 aa).

The active-site Proton donor is Glu353. Catalysis depends on residues His384 and Lys510.

This sequence belongs to the GPI family.

The protein localises to the cytoplasm. It carries out the reaction alpha-D-glucose 6-phosphate = beta-D-fructose 6-phosphate. It participates in carbohydrate biosynthesis; gluconeogenesis. Its pathway is carbohydrate degradation; glycolysis; D-glyceraldehyde 3-phosphate and glycerone phosphate from D-glucose: step 2/4. Its function is as follows. Catalyzes the reversible isomerization of glucose-6-phosphate to fructose-6-phosphate. The sequence is that of Glucose-6-phosphate isomerase from Mycolicibacterium smegmatis (Mycobacterium smegmatis).